Consider the following 363-residue polypeptide: Elongation factor Tu, chloroplastic (363 aa).

The region spanning 1–189 is the tr-type G domain; that stretch reads TLTAAITMAL…NVDEYIPTPE (189 aa). Residues 55–59 and 110–113 contribute to the GTP site; these read DCPGH and NKED.

It belongs to the TRAFAC class translation factor GTPase superfamily. Classic translation factor GTPase family. EF-Tu/EF-1A subfamily.

It is found in the plastid. The protein localises to the chloroplast. The catalysed reaction is GTP + H2O = GDP + phosphate + H(+). Functionally, GTP hydrolase that promotes the GTP-dependent binding of aminoacyl-tRNA to the A-site of ribosomes during protein biosynthesis. This is Elongation factor Tu, chloroplastic (tufA) from Gymnochlora stellata.